A 220-amino-acid polypeptide reads, in one-letter code: Adenylate kinase (220 aa).

An ATP-binding site is contributed by 10 to 15 (GAGKGT). Residues 30–59 (STGDMLRAAVKAGTPLGVEAKGYMDAGKLV) are NMP. Residues Thr31, Arg36, 57-59 (KLV), 85-88 (GFPR), and Gln92 contribute to the AMP site. The interval 122–159 (GRRTHPASGRTYHVKFNPPKVEGHDDVTGEPLIQRDDD) is LID. ATP-binding positions include Arg123 and 132 to 133 (TY). Residues Arg156 and Arg167 each coordinate AMP. Gly206 provides a ligand contact to ATP.

This sequence belongs to the adenylate kinase family. In terms of assembly, monomer.

The protein localises to the cytoplasm. The catalysed reaction is AMP + ATP = 2 ADP. It participates in purine metabolism; AMP biosynthesis via salvage pathway; AMP from ADP: step 1/1. Its function is as follows. Catalyzes the reversible transfer of the terminal phosphate group between ATP and AMP. Plays an important role in cellular energy homeostasis and in adenine nucleotide metabolism. The protein is Adenylate kinase of Burkholderia cenocepacia (strain HI2424).